A 922-amino-acid chain; its full sequence is MIWLRNRRCLEPLQGTPKWVPVLGELQKTLQKGEYLPLRPLPMFESNFVQVTHQGGPVFVNHRTNRLAMGVAASLPGLVLPDILLIGQPAEDRDCSGLVLTRMIPLDLVHLCVHDLSAWRLKLRLVSGRQYYLALDAPDNEVGFLFHCWVRLINLLQEPAPTWTPRTTRTAPLDMPLAEAPASTWHLQDQPISRHAVRVAERNFPHKTVAAQRQRKAKALKRSFKSQAVGDSVPLIWSQLEHADVRKKPAEKKSHSDPRPDRTHTQIRLPEKTSITTWTIFSIISSTANQTQSSPKACTSASDEATGQGHVVESPSHCVSADSPDGFFLGSCSSLDPCLWHQDTEDLMDSGGSTLSSAASGLAPYPPAACLSTPYSSIPRGREKAGPMGSHQGPGPPPCQKAPSGLVTSCKAPFLVDQSQKLPAVPASSWKPPPGLAPPQKAPAASAPPRKAPAVPAPSQKAPAVPAPSQKAPAIPAPSRKASAASASPRKASAVPAPPQKTPPPSQKAPSVPTIPQKAVSPTAPKKKSLLLPAPSQKALPTSPTEYQMALSPPASRGKLPGDFDVLPTGIPGRAVLERSQSGGKPEPVVTVRTQETDVVEMTTQAKSPESPFTVTKKESKDILISQTKEVTLEAFRGQGKLEDWAHWAKLEERSPDLPGVRSKELEQRKRWVKAKELAVEGPSQEHSRPFSVEALTLTKLMITANSKEQPSKSALVSLPSWLLATPQASATSMMASVPSRPGQLSLLEGKPVVVREQPESHTWVKEGKRPWGEMKEQPWGEMKEPPWDPKGPPKVPFRSKPTSASLKREGISQAPIPLTASPWEDLRPSPLSETLISKMEATARASQQPKRVSQEPMRMPAQHPLATVGSSSEILLPMLLELETVRNTATKAEEIQEESGVLNLLPSLQHSQHSEWPDAGA.

Disordered regions lie at residues 244–264, 292–317, 373–404, 424–597, 758–830, and 842–869; these read DVRK…DRTH, QSSP…SPSH, TPYS…KAPS, AVPA…TQET, QPES…LRPS, and ATAR…LATV. The segment covering 292-305 has biased composition (polar residues); it reads QSSPKACTSASDEA. Over residues 431–441 the composition is skewed to pro residues; the sequence is KPPPGLAPPQK. 2 stretches are compositionally biased toward low complexity: residues 442–458 and 471–495; these read APAA…VPAP and KAPA…ASAV. The segment covering 496 to 507 has biased composition (pro residues); the sequence is PAPPQKTPPPSQ. A compositionally biased stretch (basic and acidic residues) spans 758-788; it reads QPESHTWVKEGKRPWGEMKEQPWGEMKEPPW.

It belongs to the GARIN family.

In Homo sapiens (Human), this protein is Golgi-associated RAB2 interactor protein 5B.